We begin with the raw amino-acid sequence, 159 residues long: LOB domain-containing protein 25 (159 aa).

Residues 38 to 139 (SPCAACKFLR…RELEETNADL (102 aa)) form the LOB domain.

The protein belongs to the LOB domain-containing protein family. In terms of tissue distribution, expressed in young shoots, roots, stems, leaves and flowers.

The protein is LOB domain-containing protein 25 (LBD25) of Arabidopsis thaliana (Mouse-ear cress).